Consider the following 671-residue polypeptide: Probable potassium transport system protein Kup 2 (671 aa).

A run of 12 helical transmembrane segments spans residues 18 to 38 (GFLI…LYAM), 60 to 80 (VSLV…LIAL), 103 to 123 (WLIV…ALTP), 149 to 169 (VTTL…ASLV), 173 to 193 (FGPI…INSF), 218 to 238 (AGFF…ALYS), 252 to 272 (WPFV…WLLA), 292 to 312 (MVIY…QALI), 343 to 363 (LYIP…VLYF), 373 to 393 (YSLA…YFLI), 402 to 422 (IAFI…ASLV), and 424 to 444 (FING…VMFI).

Belongs to the HAK/KUP transporter (TC 2.A.72) family.

The protein resides in the cell membrane. It catalyses the reaction K(+)(in) + H(+)(in) = K(+)(out) + H(+)(out). Functionally, transport of potassium into the cell. Likely operates as a K(+):H(+) symporter. This Lactococcus lactis subsp. cremoris (strain MG1363) protein is Probable potassium transport system protein Kup 2.